The chain runs to 153 residues: Ubiquitin-conjugating enzyme E2 36 (153 aa).

A UBC core domain is found at 5-151; sequence NLPRRIIKET…AKEWTRLYAS (147 aa). The active-site Glycyl thioester intermediate is the C89.

Belongs to the ubiquitin-conjugating enzyme family. Interacts with yeast and human Mms2, with the RING domain of RGLG2 and with UEV1A, UEV1B, UEV1C and UEV1D. Ubiquitously expressed at low level.

The catalysed reaction is S-ubiquitinyl-[E1 ubiquitin-activating enzyme]-L-cysteine + [E2 ubiquitin-conjugating enzyme]-L-cysteine = [E1 ubiquitin-activating enzyme]-L-cysteine + S-ubiquitinyl-[E2 ubiquitin-conjugating enzyme]-L-cysteine.. It participates in protein modification; protein ubiquitination. In terms of biological role, catalyzes the synthesis of non-canonical poly-ubiquitin chains that are linked through 'Lys-63'. This type of poly-ubiquitination does not lead to protein degradation by the proteasome. Mediates transcriptional activation of target genes. Required for postreplication repair of UV-damaged DNA and for adapting root developmental programs to suboptimal availability of iron. The sequence is that of Ubiquitin-conjugating enzyme E2 36 (UBC36) from Arabidopsis thaliana (Mouse-ear cress).